Consider the following 127-residue polypeptide: uncharacterized protein (127 aa).

Residues 91–113 traverse the membrane as a helical segment; that stretch reads IYLIVSIAVSILAIIAFFIFLML.

It localises to the membrane. This is an uncharacterized protein from Bacillus subtilis (strain 168).